The chain runs to 488 residues: Glutamate synthase [NADPH] small chain (488 aa).

A 4Fe-4S ferredoxin-type domain is found at 38–69 (ESLRQQATRCMDCGIPFCHNGCPLGNLIPEWN).

[4Fe-4S] cluster is required as a cofactor.

It carries out the reaction 2 L-glutamate + NADP(+) = L-glutamine + 2-oxoglutarate + NADPH + H(+). The protein operates within amino-acid biosynthesis; L-glutamate biosynthesis via GLT pathway; L-glutamate from 2-oxoglutarate and L-glutamine (NADP(+) route): step 1/1. This chain is Glutamate synthase [NADPH] small chain (gltD), found in Mycobacterium tuberculosis (strain CDC 1551 / Oshkosh).